Consider the following 505-residue polypeptide: Deoxyguanosinetriphosphate triphosphohydrolase (505 aa).

In terms of domain architecture, HD spans 66–273; sequence RLTHSMEVQQ…MEAADDISYC (208 aa).

This sequence belongs to the dGTPase family. Type 1 subfamily. Homotetramer. It depends on Mg(2+) as a cofactor.

It carries out the reaction dGTP + H2O = 2'-deoxyguanosine + triphosphate + H(+). Its function is as follows. dGTPase preferentially hydrolyzes dGTP over the other canonical NTPs. This is Deoxyguanosinetriphosphate triphosphohydrolase from Shigella boydii serotype 18 (strain CDC 3083-94 / BS512).